Consider the following 566-residue polypeptide: Rho GTPase-activating protein gacH (566 aa).

Disordered regions lie at residues 1 to 56, 65 to 84, 128 to 168, and 322 to 366; these read MSGV…SGAT, LLKQ…NNNK, SEDE…SAHS, and KPQV…NSKN. A compositionally biased stretch (low complexity) spans 14–35; that stretch reads SSTTATTTGSSKSSLNISKSVS. Residues 36-56 show a composition bias toward polar residues; that stretch reads PTGNKAVSPMSSPNSLQSGAT. Over residues 65-83 the composition is skewed to low complexity; that stretch reads LLKQQQQPNHSITTNNNNN. Acidic residues predominate over residues 130–141; it reads DEYEDDEDEDEN. Positions 142-160 are enriched in low complexity; the sequence is NNSVNNNSNNNSNNNNNNN. Polar residues predominate over residues 327 to 337; the sequence is KSPQSSGSLST. The segment covering 345-356 has biased composition (low complexity); the sequence is SSSLQRSRSVSQ. The 196-residue stretch at 369-564 folds into the Rho-GAP domain; the sequence is GSLDTILEKE…LLIENYNLFY (196 aa).

The protein localises to the cytoplasm. Rho GTPase-activating protein involved in the signal transduction pathway. In Dictyostelium discoideum (Social amoeba), this protein is Rho GTPase-activating protein gacH (gacH).